The sequence spans 89 residues: Small ribosomal subunit protein uS14 (89 aa).

It belongs to the universal ribosomal protein uS14 family. As to quaternary structure, part of the 30S ribosomal subunit. Contacts proteins S3 and S10.

In terms of biological role, binds 16S rRNA, required for the assembly of 30S particles and may also be responsible for determining the conformation of the 16S rRNA at the A site. This Exiguobacterium sibiricum (strain DSM 17290 / CCUG 55495 / CIP 109462 / JCM 13490 / 255-15) protein is Small ribosomal subunit protein uS14.